Consider the following 222-residue polypeptide: uncharacterized protein (222 aa).

Residues Met-1 to Ala-27 constitute a signal peptide (tat-type signal). 3 4Fe-4S ferredoxin-type domains span residues Tyr-37–Ser-67, Thr-83–Gln-114, and Gly-115–Val-144. The [4Fe-4S] cluster site is built by Cys-46, Cys-49, Cys-52, Cys-56, Cys-92, Cys-95, Cys-100, Cys-104, Cys-124, Cys-127, Cys-130, Cys-134, Cys-151, Cys-154, Cys-167, and Cys-171.

In terms of processing, exported by the Tat system. The position of the signal peptide cleavage has not been experimentally proven. Can also be exported by the Sec system.

This is an uncharacterized protein from Escherichia coli (strain K12).